The following is an 83-amino-acid chain: Small ribosomal subunit protein bS20 (83 aa).

This sequence belongs to the bacterial ribosomal protein bS20 family.

Binds directly to 16S ribosomal RNA. The sequence is that of Small ribosomal subunit protein bS20 from Amoebophilus asiaticus (strain 5a2).